The chain runs to 621 residues: Chaperone protein HtpG (621 aa).

The tract at residues 1-328 (MKQEKKKFDA…SEDLPLNISR (328 aa)) is a; substrate-binding. Residues 329–544 (ESLQHNNVLE…EAAMDIRMER (216 aa)) are b. The disordered stretch occupies residues 478–498 (DVDQATSSSEEKNKDDKKSDD). A compositionally biased stretch (basic and acidic residues) spans 486 to 498 (SEEKNKDDKKSDD). Positions 545-621 (FLIEQKQIAN…LNDIVQKAIL (77 aa)) are c.

This sequence belongs to the heat shock protein 90 family. In terms of assembly, homodimer.

The protein localises to the cytoplasm. Its function is as follows. Molecular chaperone. Has ATPase activity. The chain is Chaperone protein HtpG from Rickettsia bellii (strain RML369-C).